The following is a 433-amino-acid chain: Phosphomethylpyrimidine synthase 1 (433 aa).

Residues methionine 95, tyrosine 124, histidine 163, 185 to 187, 226 to 229, and glutamate 265 contribute to the substrate site; these read SRG and NAMR. Histidine 269 is a Zn(2+) binding site. Tyrosine 292 serves as a coordination point for substrate. Histidine 333 is a Zn(2+) binding site. Cysteine 408, cysteine 411, and cysteine 415 together coordinate [4Fe-4S] cluster.

This sequence belongs to the ThiC family. [4Fe-4S] cluster serves as cofactor.

It catalyses the reaction 5-amino-1-(5-phospho-beta-D-ribosyl)imidazole + S-adenosyl-L-methionine = 4-amino-2-methyl-5-(phosphooxymethyl)pyrimidine + CO + 5'-deoxyadenosine + formate + L-methionine + 3 H(+). The protein operates within cofactor biosynthesis; thiamine diphosphate biosynthesis. Functionally, catalyzes the synthesis of the hydroxymethylpyrimidine phosphate (HMP-P) moiety of thiamine from aminoimidazole ribotide (AIR) in a radical S-adenosyl-L-methionine (SAM)-dependent reaction. The protein is Phosphomethylpyrimidine synthase 1 of Methanothermobacter thermautotrophicus (strain ATCC 29096 / DSM 1053 / JCM 10044 / NBRC 100330 / Delta H) (Methanobacterium thermoautotrophicum).